The sequence spans 484 residues: Allantoinase, mitochondrial (484 aa).

Zn(2+)-binding residues include His-76, His-78, Lys-163, His-199, His-251, and Asp-324. Lys-163 is modified (N6-carboxylysine).

This sequence belongs to the metallo-dependent hydrolases superfamily. Allantoinase family. In terms of assembly, homotetramer. It depends on Zn(2+) as a cofactor. Carboxylation allows a single lysine to coordinate two zinc ions. In terms of tissue distribution, liver and kidney.

It is found in the mitochondrion. It carries out the reaction (S)-allantoin + H2O = allantoate + H(+). The protein operates within nitrogen metabolism; (S)-allantoin degradation; allantoate from (S)-allantoin: step 1/1. This Aquarana catesbeiana (American bullfrog) protein is Allantoinase, mitochondrial (ALN).